The chain runs to 594 residues: Neopentalenolactone D synthase (594 aa).

FAD contacts are provided by residues 64-65 (IG), 86-87 (DK), 94-95 (TW), 106-107 (DV), tyrosine 112, valine 156, and methionine 494.

The protein belongs to the FAD-binding monooxygenase family. It depends on FAD as a cofactor.

The enzyme catalyses 1-deoxy-11-oxopentalenate + NADPH + O2 + H(+) = neopentalenolactone D + NADP(+) + H2O. Its pathway is antibiotic biosynthesis; neopentalenolactone biosynthesis. Its function is as follows. Catalyzes the flavin-dependent Baeyer-Villiger oxidation of 1-deoxy-11-oxopentalenic acid to neopentalenolactone D in the biosynthesis of neopentalenolactone antibiotic. The sequence is that of Neopentalenolactone D synthase (ptlE) from Streptomyces avermitilis (strain ATCC 31267 / DSM 46492 / JCM 5070 / NBRC 14893 / NCIMB 12804 / NRRL 8165 / MA-4680).